A 499-amino-acid chain; its full sequence is MSNSNDNIWNNTEELNELLRIRREKLNILRSMGIEPYGIDRFERTNVSSDIKNDYENFEGKVVTLAGRIMSKRAHGKASFADIQDRDGRIQIYVKYDTVGEKNYEIFKILDIGDIIGVTGEVFKSKTGEITIRVTDFKLLSKSLQILPEKWHGLKDPDLRYRQRYTDLIINPEVKEVFLKRTKIIKAIREFLDNRGFLEVETPILHTIAGGAAARPFITHHNALDIDMYLRIALELHLKRLIVGGLEKVYEMGRVFRNEGMDIRHNPEFTLLELYEAYTDYYGMMELTEQLFAYVAQKVNGTTKIVYQGTEIDLTPPWKRITMVDAIKEYVGVDFNEVKADAEAVEIAKRLNLETKEGMKKGEVIALVFDELVEQHLIQPTFVMDYPVEISPLAKRKHDNPAFTSRFEAFIYGREVANAFSELNDPIDQKERFLEQLKQREAGDEEAHMMDEDFINALEVGMPPTGGLGIGVDRLVMFMTDAYSIRDVILFPTMKPKND.

Mg(2+) is bound by residues E408 and E415.

It belongs to the class-II aminoacyl-tRNA synthetase family. Homodimer. Requires Mg(2+) as cofactor.

The protein resides in the cytoplasm. It carries out the reaction tRNA(Lys) + L-lysine + ATP = L-lysyl-tRNA(Lys) + AMP + diphosphate. The polypeptide is Lysine--tRNA ligase (Thermoanaerobacter sp. (strain X514)).